The chain runs to 38 residues: Histone H5 (38 aa).

The span at 1 to 15 (TESPIPVPAPAPAAK) shows a compositional bias: pro residues. The disordered stretch occupies residues 1–38 (TESPIPVPAPAPAAKPKPKRVSKRPASHPPYSDMIAAA). Residues 16 to 26 (PKPKRVSKRPA) are compositionally biased toward basic residues.

The protein belongs to the histone H1/H5 family. As to expression, erythroid cells.

The protein localises to the nucleus. Its subcellular location is the chromosome. Histone H5 performs the same function as H1, being necessary for the condensation of nucleosome chains into higher order structures, and replaces histone H1 in certain cells. This chain is Histone H5, found in Columba livia (Rock dove).